Reading from the N-terminus, the 313-residue chain is MLDNVLRIATRQSPLALWQAHYVKDALMAKHPGLTVELVPMVTRGDVILDTPLAKVGGKGLFVKELEVALLENRADIAVHSMKDVPVEFPQGLGLVTICEREDPRDAFVSNKYASLDELPAGSIVGTSSLRRQCQLAERRPDLIIRSLRGNVGTRLSKLDNGEYDAIILAVAGLKRLGLESRIRDALPPEVSLPAVGQGAVGIECRLDDTRTRELLAALNHPETALRVTAERAMNTRLEGGCQVPIGSYAELIGGEIWLRALVGAPDGSQMIRGERRGSPQDAEKMGISLAEELLNNGARAILADVYNGDAPV.

S-(dipyrrolylmethanemethyl)cysteine is present on Cys242.

The protein belongs to the HMBS family. As to quaternary structure, monomer. Dipyrromethane serves as cofactor.

The enzyme catalyses 4 porphobilinogen + H2O = hydroxymethylbilane + 4 NH4(+). It functions in the pathway porphyrin-containing compound metabolism; protoporphyrin-IX biosynthesis; coproporphyrinogen-III from 5-aminolevulinate: step 2/4. Functionally, tetrapolymerization of the monopyrrole PBG into the hydroxymethylbilane pre-uroporphyrinogen in several discrete steps. This is Porphobilinogen deaminase from Escherichia fergusonii (strain ATCC 35469 / DSM 13698 / CCUG 18766 / IAM 14443 / JCM 21226 / LMG 7866 / NBRC 102419 / NCTC 12128 / CDC 0568-73).